A 302-amino-acid chain; its full sequence is Ribosomal RNA small subunit methyltransferase H (302 aa).

S-adenosyl-L-methionine-binding positions include 34-36 (AGH), Asp53, Phe80, Asp101, and Gln108. The interval 283–302 (LEENPRSKSAKMRVLKKIER) is disordered. Basic residues predominate over residues 290–302 (KSAKMRVLKKIER).

Belongs to the methyltransferase superfamily. RsmH family.

The protein localises to the cytoplasm. The catalysed reaction is cytidine(1402) in 16S rRNA + S-adenosyl-L-methionine = N(4)-methylcytidine(1402) in 16S rRNA + S-adenosyl-L-homocysteine + H(+). Functionally, specifically methylates the N4 position of cytidine in position 1402 (C1402) of 16S rRNA. This chain is Ribosomal RNA small subunit methyltransferase H, found in Mycoplasma mobile (strain ATCC 43663 / 163K / NCTC 11711) (Mesomycoplasma mobile).